A 123-amino-acid chain; its full sequence is Probable cytochrome c 2.2 (123 aa).

The interval 1–21 is disordered; the sequence is MGKKKSDTASGGAIPEGDNEK. Residues C30, C33, H34, and M95 each contribute to the heme c site.

The protein belongs to the cytochrome c family. Binds 1 heme c group covalently per subunit.

It localises to the mitochondrion intermembrane space. Its function is as follows. Electron carrier protein. The oxidized form of the cytochrome c heme group can accept an electron from the heme group of the cytochrome c1 subunit of cytochrome reductase. Cytochrome c then transfers this electron to the cytochrome oxidase complex, the final protein carrier in the mitochondrial electron-transport chain. The chain is Probable cytochrome c 2.2 (cyc-2.2) from Caenorhabditis elegans.